The primary structure comprises 208 residues: High frequency lysogenization protein HflD homolog (208 aa).

Belongs to the HflD family.

The protein resides in the cytoplasm. Its subcellular location is the cell inner membrane. The polypeptide is High frequency lysogenization protein HflD homolog (Yersinia pestis bv. Antiqua (strain Nepal516)).